The sequence spans 304 residues: Serine/threonine-protein phosphatase PP1 isozyme 3 (304 aa).

Positions 61, 63, 89, and 121 each coordinate Mn(2+). Histidine 122 acts as the Proton donor in catalysis. Mn(2+)-binding residues include histidine 170 and histidine 245.

This sequence belongs to the PPP phosphatase family. PP-1 subfamily. Requires Mn(2+) as cofactor.

It catalyses the reaction O-phospho-L-seryl-[protein] + H2O = L-seryl-[protein] + phosphate. It carries out the reaction O-phospho-L-threonyl-[protein] + H2O = L-threonyl-[protein] + phosphate. The chain is Serine/threonine-protein phosphatase PP1 isozyme 3 (NPP3) from Nicotiana tabacum (Common tobacco).